Consider the following 333-residue polypeptide: Beta-ketoacyl-[acyl-carrier-protein] synthase III (333 aa).

Residues Cys114 and His255 contribute to the active site. The interval 256–260 is ACP-binding; that stretch reads QANYR. Asn285 is a catalytic residue.

The protein belongs to the thiolase-like superfamily. FabH family. Homodimer.

The protein resides in the cytoplasm. It carries out the reaction malonyl-[ACP] + acetyl-CoA + H(+) = 3-oxobutanoyl-[ACP] + CO2 + CoA. The protein operates within lipid metabolism; fatty acid biosynthesis. Its function is as follows. Catalyzes the condensation reaction of fatty acid synthesis by the addition to an acyl acceptor of two carbons from malonyl-ACP. Catalyzes the first condensation reaction which initiates fatty acid synthesis and may therefore play a role in governing the total rate of fatty acid production. Possesses both acetoacetyl-ACP synthase and acetyl transacylase activities. Its substrate specificity determines the biosynthesis of branched-chain and/or straight-chain of fatty acids. This is Beta-ketoacyl-[acyl-carrier-protein] synthase III from Aliarcobacter butzleri (strain RM4018) (Arcobacter butzleri).